The primary structure comprises 417 residues: Tyrosine--tRNA ligase (417 aa).

Residue Y39 coordinates L-tyrosine. Positions 44-53 (CTARSLHIGN) match the 'HIGH' region motif. L-tyrosine is bound by residues Y176 and Q180. The 'KMSKS' region motif lies at 236–240 (KMGKT). K239 is an ATP binding site. In terms of domain architecture, S4 RNA-binding spans 350 to 417 (FGVLNAFVKA…KKKHILIKPA (68 aa)).

Belongs to the class-I aminoacyl-tRNA synthetase family. TyrS type 1 subfamily. As to quaternary structure, homodimer.

It localises to the cytoplasm. The catalysed reaction is tRNA(Tyr) + L-tyrosine + ATP = L-tyrosyl-tRNA(Tyr) + AMP + diphosphate + H(+). In terms of biological role, catalyzes the attachment of tyrosine to tRNA(Tyr) in a two-step reaction: tyrosine is first activated by ATP to form Tyr-AMP and then transferred to the acceptor end of tRNA(Tyr). This chain is Tyrosine--tRNA ligase, found in Bradyrhizobium diazoefficiens (strain JCM 10833 / BCRC 13528 / IAM 13628 / NBRC 14792 / USDA 110).